The chain runs to 538 residues: Transmembrane protein 266 (538 aa).

The Cytoplasmic segment spans residues methionine 1 to serine 102. A helical membrane pass occupies residues phenylalanine 103–threonine 123. Topologically, residues lysine 124–asparagine 130 are extracellular. The helical transmembrane segment at alanine 131 to serine 151 threads the bilayer. Over glutamate 152–lysine 169 the chain is Cytoplasmic. Residues isoleucine 170 to valine 190 form a helical membrane-spanning segment. The Extracellular portion of the chain corresponds to alanine 191 to aspartate 199. Residues alanine 200–valine 220 traverse the membrane as a helical segment. At leucine 221–alanine 538 the chain is on the cytoplasmic side. Residues glutamine 232–glutamate 278 adopt a coiled-coil conformation. 2 disordered regions span residues asparagine 380–leucine 435 and serine 453–serine 483. Low complexity predominate over residues serine 381 to cysteine 396. Positions glycine 397–serine 417 are enriched in polar residues. Residues proline 425 to proline 434 show a composition bias toward low complexity.

As to quaternary structure, homodimer; disulfide-linked. In terms of tissue distribution, in brain, present in the granule layer of the cerebellar cortex. Localizes on the post-synaptic side of glutamatergic mossy fibers and granule cells in the cerebellum (at protein level). As to expression, predominantly expressed in granule cells in cerebellum (at protein level).

It is found in the cell projection. The protein localises to the dendrite. Its subcellular location is the perikaryon. It localises to the cell membrane. Voltage-sensor protein present on the post-synaptic side of glutamatergic mossy fibers and granule cells in the cerebellum. Despite the presence of a voltage-sensor segment, does not form a functional ion channel and its precise role remains unclear. Undergoes both rapid and slow structural rearrangements in response to changes in voltage. Contains a zinc-binding site that can regulate the slow conformational transition. The polypeptide is Transmembrane protein 266 (Mus musculus (Mouse)).